Reading from the N-terminus, the 233-residue chain is MKSLLGTKVGMTQVFTETGKAVAATVIYVEPNKVLAVKTNEKDGYNAIQIGYETVKEKALNKPLLGQFKKANSDPKRHIKEFRDVVAEVGAELTVSEFEPGQLVNAQAYTKGHGFTGSIKRHNFSMGPMGHGAGYPHRYVGSIAKGRGGSQAQRVFKGTKLPGHYGHELVTTKNLLVLDVKANENLILIKGAIPGPKGSIVLLKSAKKVGHIVSDPQVVNYLANKASSSEANK.

The protein belongs to the universal ribosomal protein uL3 family. Part of the 50S ribosomal subunit. Forms a cluster with proteins L14 and L19.

Functionally, one of the primary rRNA binding proteins, it binds directly near the 3'-end of the 23S rRNA, where it nucleates assembly of the 50S subunit. This is Large ribosomal subunit protein uL3 from Ureaplasma urealyticum serovar 10 (strain ATCC 33699 / Western).